The following is a 98-amino-acid chain: NADH-ubiquinone oxidoreductase chain 4L (98 aa).

Transmembrane regions (helical) follow at residues 2-22 (TSAF…TFMF), 26-46 (LMST…MTST), and 59-79 (IPIT…ALLV).

The protein belongs to the complex I subunit 4L family. Core subunit of respiratory chain NADH dehydrogenase (Complex I) which is composed of 45 different subunits.

It is found in the mitochondrion inner membrane. It catalyses the reaction a ubiquinone + NADH + 5 H(+)(in) = a ubiquinol + NAD(+) + 4 H(+)(out). Core subunit of the mitochondrial membrane respiratory chain NADH dehydrogenase (Complex I) which catalyzes electron transfer from NADH through the respiratory chain, using ubiquinone as an electron acceptor. Part of the enzyme membrane arm which is embedded in the lipid bilayer and involved in proton translocation. The chain is NADH-ubiquinone oxidoreductase chain 4L from Rattus norvegicus (Rat).